Here is an 849-residue protein sequence, read N- to C-terminus: Probable ubiquitin carboxyl-terminal hydrolase 1 (849 aa).

The 101-residue stretch at 20 to 120 (QPASLPFQDS…EGLAIERKVL (101 aa)) folds into the DUSP domain. The region spanning 279-848 (CGLYNLGNSC…SAYVLFYRAK (570 aa)) is the USP domain. C288 acts as the Nucleophile in catalysis. H806 functions as the Proton acceptor in the catalytic mechanism.

The protein belongs to the peptidase C19 family.

The enzyme catalyses Thiol-dependent hydrolysis of ester, thioester, amide, peptide and isopeptide bonds formed by the C-terminal Gly of ubiquitin (a 76-residue protein attached to proteins as an intracellular targeting signal).. This chain is Probable ubiquitin carboxyl-terminal hydrolase 1 (ubp1), found in Schizosaccharomyces pombe (strain 972 / ATCC 24843) (Fission yeast).